A 278-amino-acid polypeptide reads, in one-letter code: HTH-type transcriptional activator RhaS (278 aa).

In terms of domain architecture, HTH araC/xylS-type spans 174-272 (NQLMAWLEDH…SWSPREIRQG (99 aa)). 2 consecutive DNA-binding regions (H-T-H motif) follow at residues 191 to 212 (ETVADVFSLSLRTLHRQLKQHT) and 239 to 262 (VTDIAYRCGFGDSNHFSTLFRREF).

In terms of assembly, binds DNA as a dimer.

It localises to the cytoplasm. Its function is as follows. Activates expression of the rhaBAD and rhaT operons. The polypeptide is HTH-type transcriptional activator RhaS (Enterobacter sp. (strain 638)).